A 210-amino-acid polypeptide reads, in one-letter code: Cancer/testis antigen 2 (210 aa).

Gly residues-rich tracts occupy residues 1 to 47 (MQAE…GPRG) and 56 to 66 (PRGGAPRGPHG). Disordered regions lie at residues 1–80 (MQAE…PCGA) and 154–197 (GLGS…DGCR). The span at 163-177 (QKARDLRTPKHKVSE) shows a compositional bias: basic and acidic residues.

The protein belongs to the CTAG/PCC1 family. As to expression, testis and very low level in placenta and in some uterus samples. Observed in 25-50% of tumor samples of melanomas, non-small-cell lung carcinomas, bladder, prostate and head and neck cancers.

The polypeptide is Cancer/testis antigen 2 (CTAG2) (Homo sapiens (Human)).